Reading from the N-terminus, the 435-residue chain is MTSSEGPGIPAIKTPPVKLRGSCHACALSKLKCSQDKPTCSRCVKRGTACQYLASKRAGRKQGSKTGSFKSFYNMKTDYSTSINKDDDRRELMEVSTELMQYALQQDRSLEVYRRNQYHQRTPSYPESIPSLLSSTGPGTSATSPLTLGPPDYDGYLASPISLSLLDVPDMDYFPGADMSANVMDGFPDPPSFFPSGEPIPTLQENILKTSFADSPVPANSPSVPPTPDVTSVGTPRQCFCFPRALTLLRELFPNPSLSCVTPSSESGSASPPTVQQVITKNEQTLRDITEIIECSCSEDGYTITIITLAAFKVLAWYSAVAHISPISEDSQALEEIDRTPAVVRGYNIDGEDQGRMAAQLVLSELHRVQRLVGNLYQRLKDQVSGGKPARLSTTGVNDSNHYSLPFHLLERLAVDLGAQLRSLSSEIVDRLRRG.

Residues 23–50 (CHACALSKLKCSQDKPTCSRCVKRGTAC) constitute a DNA-binding region (zn(2)-C6 fungal-type). The tract at residues 117–147 (QYHQRTPSYPESIPSLLSSTGPGTSATSPLT) is disordered. Low complexity predominate over residues 130 to 147 (PSLLSSTGPGTSATSPLT).

Its subcellular location is the nucleus. Transcription factor that regulates the expression of the gene cluster that mediates the biosynthesis of monodictyphenone, a prenyl xanthone derivative. The polypeptide is Monodictyphenone cluster transcription factor (Emericella nidulans (strain FGSC A4 / ATCC 38163 / CBS 112.46 / NRRL 194 / M139) (Aspergillus nidulans)).